Reading from the N-terminus, the 328-residue chain is Formimidoylglutamase (328 aa).

The Mn(2+) site is built by His-133, Asp-159, His-161, Asp-163, Asp-253, and Asp-255.

It belongs to the arginase family. Mn(2+) serves as cofactor.

The catalysed reaction is N-formimidoyl-L-glutamate + H2O = formamide + L-glutamate. It participates in amino-acid degradation; L-histidine degradation into L-glutamate; L-glutamate from N-formimidoyl-L-glutamate (hydrolase route): step 1/1. In terms of biological role, catalyzes the conversion of N-formimidoyl-L-glutamate to L-glutamate and formamide. The polypeptide is Formimidoylglutamase (Streptococcus pyogenes serotype M5 (strain Manfredo)).